We begin with the raw amino-acid sequence, 161 residues long: Phosphopantetheine adenylyltransferase (161 aa).

Ser-8 provides a ligand contact to substrate. Residues Ser-8–Phe-9 and His-16 contribute to the ATP site. Residues Lys-40, Thr-72, and Arg-86 each coordinate substrate. ATP contacts are provided by residues Gly-87–Arg-89, Glu-97, and His-122–Ser-128.

Belongs to the bacterial CoaD family. In terms of assembly, homohexamer. Requires Mg(2+) as cofactor.

It is found in the cytoplasm. It carries out the reaction (R)-4'-phosphopantetheine + ATP + H(+) = 3'-dephospho-CoA + diphosphate. Its pathway is cofactor biosynthesis; coenzyme A biosynthesis; CoA from (R)-pantothenate: step 4/5. Functionally, reversibly transfers an adenylyl group from ATP to 4'-phosphopantetheine, yielding dephospho-CoA (dPCoA) and pyrophosphate. This Prochlorococcus marinus (strain SARG / CCMP1375 / SS120) protein is Phosphopantetheine adenylyltransferase.